The chain runs to 139 residues: D-ribose pyranase (139 aa).

H20 acts as the Proton donor in catalysis. Residues D28, H106, and 128-130 (YAN) each bind substrate.

It belongs to the RbsD / FucU family. RbsD subfamily. Homodecamer.

The protein localises to the cytoplasm. It catalyses the reaction beta-D-ribopyranose = beta-D-ribofuranose. It functions in the pathway carbohydrate metabolism; D-ribose degradation; D-ribose 5-phosphate from beta-D-ribopyranose: step 1/2. Catalyzes the interconversion of beta-pyran and beta-furan forms of D-ribose. The sequence is that of D-ribose pyranase from Escherichia coli O81 (strain ED1a).